The following is a 282-amino-acid chain: Probable aquaporin PIP2-6 (282 aa).

2 helical membrane-spanning segments follow: residues 39–59 (ALIA…ATVI) and 76–96 (LGIA…TAGI). Positions 102–104 (NPA) match the NPA 1 motif. The next 3 helical transmembrane spans lie at 121 to 141 (VMYI…VKGI), 163 to 183 (GTAL…VFSA), and 197 to 217 (VLAP…TIPI). Positions 223 to 225 (NPA) match the NPA 2 motif. Residues 245-265 (IFWAGPFIGALAAAAYHQYIL) traverse the membrane as a helical segment.

It belongs to the MIP/aquaporin (TC 1.A.8) family. PIP (TC 1.A.8.11) subfamily. As to expression, expressed in roots and leaves.

Its subcellular location is the cell membrane. Aquaporins facilitate the transport of water and small neutral solutes across cell membranes. This chain is Probable aquaporin PIP2-6 (PIP2-6), found in Oryza sativa subsp. japonica (Rice).